Here is a 1784-residue protein sequence, read N- to C-terminus: MARLLPPTGTDVFRPLTLESLAEIDRRMAEEAAEQERMKEQNVKVAEEDLPKPTSDLEAGKVLPFIYGDPPPNLLNVPIEELDPYYKAQKTFIVIDKKNTIYRFNTEPACYCLSPFNPVRRAAIRILIHSLFSLVIMLTILTNCVFMAMSDPPGWSKILEYVFTGIYTFEAMVKVLSRGFCIGDFTFLRDPWNWLDFMVISMAYLTEFVDLGNISALRTFRVLRALKTITVIPGLKTIVGALIQSVKKLADVMILTVFCLSVFALIGLQLFMGNLRQKCVLWPPVGWYSDNLTVLSNYTDINGNGTANSTFDYQKYINSEENYYYVPGQMDPLVCGNSSDAGLCPEGYICLKAGRNPNYGYTSYDNFGWAFLALFRLMTQDFWENLFQLTLRAAGKTYMIFFVVIIFLGSFYLINLILAVVAMAYAEQNEATAAEAKEKEEEYAKIMEQLKKQAEQKNGMVNGSKTSLSSKKKGDNDQMQSDYDGIALKPLSKSNGSKGNINYLEVPDSQIRKPSVVSAVESALDAQEDIERPCPPGWYKFADIFLKWDCCIPWVKFKRIVYLFVMDPFVDLGITLCIVLNTVFMAMEHYPMSVHVEEVLAIGNLVFTGIFAAEMVLKLIALDPYYYFQVGWNIFDSIIVTMSLVELMLADVEGLSVLRSFRLMRVFKLAKSWPTLNMLIKIIGNSVGALGNLTLVLAIIVFIFAVVGMQLFGKSYTDSVCKISSDCELPRWHMADFFHAFLIIFRVLCGEWIETMWDCMEVAGQGMCIIVFMMVMVIGNLVVLNLFLALLLSSFSGDNLSASDDDGENNLQIAISRITRGIDWIKAFVNKHVRQCLNLKPKEEGAKVNGEGDAKMNAIMNSSSSMVKVPIANGESDDDDGNGSSEDEDDEGRDINMKKKNGDESSTCSTVDKPPEVEDLVEEEEEDLTSPEDCYTENCIRRCPCLDLDVSQGKGKAWWNFRKTCFAIVEHSYFETFIIFMILLSSGALAFEDIYIEQRRMIKIILEYADQVFTYVFVVEMLLKWVAYGFKVYFTNAWCWLDFLIVDVSLISLTANILGYSELGAIKSLRTLRALRPLRALSRFEGMRVVVVNALVGAIPSIFNVLLVCLIFWLIFSIMGVNLFAGKFYYCFNETSEEVFDHNVVNNKTDCYELMEFHPEVRWMNGKINFDNVGMGYLALLQVATFKGWMDIMYSAVDSRAIESQPVYEANLYMYIYFVIFIIFGSFFTLNLFIGVIIDNFNQQKAKLGGTDIFMTEEQKKYYNAMKKLGSKKPQKPIPRPTNCCQGLVFDFVTQQFFDIFIMVMICLNMVTMMVETDDQSAEIEEILFYINFAFIILFTGECVLKITALRYHYFSIGWNIFDFVVVILSILGIGLADLIEKYFVSPTLFRVIRLARIGRVLRLIRGAKGIRTLLFALMMSLPALFNIGLLLFLIMFIFSIFGMSNFAYVKKEVGIDDMMNFETFGNSIICMFMITTSAGWDGLLAPILNSPPDCDPDVDNPGSTTRGNCGNAAVGIVFFCSYIVMSFLVVVNMYIAIILENFNVATEESSDPLCEDDFEMFYETWEKFDPTASQFIDYNRLSEFCDTLKDPLRIPKPNTLKLITMDIPMVTGDKIHCLDLLLALTGEVLGGSDQMDGMKATMEEKFMANNPSKASYEPITSTLKRKQEEVAASTIQRAYRSHILKRCVKQASYMYRDKTGSKKPTGEAPEKVGMIAENMRSLYGDQAVEDDHPVGCSFSQHGKTQFGAKRPPVKVQSDVVLHSAPFPVPESSTAADNLRESIV.

The Cytoplasmic portion of the chain corresponds to 1-130; the sequence is MARLLPPTGT…RAAIRILIHS (130 aa). The tract at residues 29 to 48 is disordered; the sequence is AEEAAEQERMKEQNVKVAEE. Residues 112 to 429 form an I repeat; sequence CLSPFNPVRR…VVAMAYAEQN (318 aa). The chain crosses the membrane as a helical span at residues 131 to 149; it reads LFSLVIMLTILTNCVFMAM. Residues 150-156 lie on the Extracellular side of the membrane; the sequence is SDPPGWS. The helical transmembrane segment at 157–177 threads the bilayer; sequence KILEYVFTGIYTFEAMVKVLS. The Cytoplasmic segment spans residues 178-191; the sequence is RGFCIGDFTFLRDP. Residues 192-209 traverse the membrane as a helical segment; sequence WNWLDFMVISMAYLTEFV. At 210 to 215 the chain is on the extracellular side; sequence DLGNIS. An N-linked (GlcNAc...) asparagine glycan is attached at N213. Residues 216 to 232 traverse the membrane as a helical segment; that stretch reads ALRTFRVLRALKTITVI. Topologically, residues 233-251 are cytoplasmic; that stretch reads PGLKTIVGALIQSVKKLAD. Residues 252 to 271 form a helical membrane-spanning segment; that stretch reads VMILTVFCLSVFALIGLQLF. Residues 272-366 lie on the Extracellular side of the membrane; it reads MGNLRQKCVL…PNYGYTSYDN (95 aa). Residues C279 and C335 are joined by a disulfide bond. N-linked (GlcNAc...) asparagine glycosylation is found at N291, N304, and N337. Cysteines 344 and 350 form a disulfide. An intramembrane region (pore-forming) is located at residues 367 to 391; sequence FGWAFLALFRLMTQDFWENLFQLTL. Residues 392 to 398 lie on the Extracellular side of the membrane; that stretch reads RAAGKTY. A helical transmembrane segment spans residues 399–419; sequence MIFFVVIIFLGSFYLINLILA. Residues 420-568 are Cytoplasmic-facing; that stretch reads VVAMAYAEQN…RIVYLFVMDP (149 aa). A disordered region spans residues 455-478; sequence EQKNGMVNGSKTSLSSKKKGDNDQ. An II repeat occupies 550–821; sequence CCIPWVKFKR…QIAISRITRG (272 aa). Residues 569-587 traverse the membrane as a helical segment; that stretch reads FVDLGITLCIVLNTVFMAM. Topologically, residues 588-598 are extracellular; it reads EHYPMSVHVEE. A helical transmembrane segment spans residues 599 to 618; it reads VLAIGNLVFTGIFAAEMVLK. The Cytoplasmic portion of the chain corresponds to 619-632; sequence LIALDPYYYFQVGW. The helical transmembrane segment at 633-652 threads the bilayer; the sequence is NIFDSIIVTMSLVELMLADV. Topologically, residues 653–654 are extracellular; it reads EG. A helical membrane pass occupies residues 655–672; that stretch reads LSVLRSFRLMRVFKLAKS. At 673 to 688 the chain is on the cytoplasmic side; it reads WPTLNMLIKIIGNSVG. The chain crosses the membrane as a helical span at residues 689-707; it reads ALGNLTLVLAIIVFIFAVV. Topologically, residues 708–736 are extracellular; the sequence is GMQLFGKSYTDSVCKISSDCELPRWHMAD. A disulfide bond links C721 and C727. The pore-forming intramembrane region spans 737–757; it reads FFHAFLIIFRVLCGEWIETMW. The Extracellular segment spans residues 758 to 768; it reads DCMEVAGQGMC. An intrachain disulfide couples C759 to C768. A helical membrane pass occupies residues 769–787; it reads IIVFMMVMVIGNLVVLNLF. The Cytoplasmic portion of the chain corresponds to 788-973; that stretch reads LALLLSSFSG…TCFAIVEHSY (186 aa). Positions 870–928 are disordered; that stretch reads PIANGESDDDDGNGSSEDEDDEGRDINMKKKNGDESSTCSTVDKPPEVEDLVEEEEEDL. A compositionally biased stretch (acidic residues) spans 875–892; the sequence is ESDDDDGNGSSEDEDDEG. Basic and acidic residues predominate over residues 893–903; sequence RDINMKKKNGD. The segment covering 917–928 has biased composition (acidic residues); the sequence is VEDLVEEEEEDL. An III repeat occupies 954–1269; the sequence is KGKAWWNFRK…KKYYNAMKKL (316 aa). Residues 974-991 form a helical membrane-spanning segment; that stretch reads FETFIIFMILLSSGALAF. Topologically, residues 992-1004 are extracellular; the sequence is EDIYIEQRRMIKI. Residues 1005-1023 form a helical membrane-spanning segment; sequence ILEYADQVFTYVFVVEMLL. Topologically, residues 1024-1037 are cytoplasmic; it reads KWVAYGFKVYFTNA. A helical transmembrane segment spans residues 1038–1056; that stretch reads WCWLDFLIVDVSLISLTAN. The Extracellular portion of the chain corresponds to 1057-1064; that stretch reads ILGYSELG. Residues 1065–1083 traverse the membrane as a helical segment; it reads AIKSLRTLRALRPLRALSR. The Cytoplasmic portion of the chain corresponds to 1084–1101; that stretch reads FEGMRVVVVNALVGAIPS. The chain crosses the membrane as a helical span at residues 1102–1121; the sequence is IFNVLLVCLIFWLIFSIMGV. Residues 1122-1173 are Extracellular-facing; sequence NLFAGKFYYCFNETSEEVFDHNVVNNKTDCYELMEFHPEVRWMNGKINFDNV. A disulfide bond links C1131 and C1151. N-linked (GlcNAc...) asparagine glycosylation is found at N1133 and N1147. Residues 1174 to 1195 constitute an intramembrane region (pore-forming); sequence GMGYLALLQVATFKGWMDIMYS. At 1196–1212 the chain is on the extracellular side; that stretch reads AVDSRAIESQPVYEANL. A helical membrane pass occupies residues 1213–1234; sequence YMYIYFVIFIIFGSFFTLNLFI. At 1235-1297 the chain is on the cytoplasmic side; it reads GVIIDNFNQQ…LVFDFVTQQF (63 aa). The interval 1253-1255 is important for rapid channel inactivation; the sequence is IFM. One copy of the IV repeat lies at 1278-1575; it reads IPRPTNCCQG…WEKFDPTASQ (298 aa). A helical transmembrane segment spans residues 1298 to 1315; the sequence is FDIFIMVMICLNMVTMMV. Residues 1316 to 1326 are Extracellular-facing; it reads ETDDQSAEIEE. The helical transmembrane segment at 1327–1345 threads the bilayer; it reads ILFYINFAFIILFTGECVL. Over 1346-1357 the chain is Cytoplasmic; that stretch reads KITALRYHYFSI. The helical transmembrane segment at 1358-1375 threads the bilayer; it reads GWNIFDFVVVILSILGIG. At 1376-1388 the chain is on the extracellular side; it reads LADLIEKYFVSPT. The helical transmembrane segment at 1389 to 1405 threads the bilayer; it reads LFRVIRLARIGRVLRLI. Residues 1406-1424 lie on the Cytoplasmic side of the membrane; sequence RGAKGIRTLLFALMMSLPA. The helical transmembrane segment at 1425–1442 threads the bilayer; it reads LFNIGLLLFLIMFIFSIF. Over 1443-1464 the chain is Extracellular; sequence GMSNFAYVKKEVGIDDMMNFET. Positions 1465–1487 form an intramembrane region, pore-forming; the sequence is FGNSIICMFMITTSAGWDGLLAP. Topologically, residues 1488-1516 are extracellular; the sequence is ILNSPPDCDPDVDNPGSTTRGNCGNAAVG. Residues C1495 and C1510 are joined by a disulfide bond. Residues 1517–1539 traverse the membrane as a helical segment; sequence IVFFCSYIVMSFLVVVNMYIAII. At 1540–1784 the chain is on the cytoplasmic side; the sequence is LENFNVATEE…AADNLRESIV (245 aa). Residues 1669 to 1698 enclose the IQ domain; sequence EEVAASTIQRAYRSHILKRCVKQASYMYRD.

Belongs to the sodium channel (TC 1.A.1.10) family. Nav1.4/SCN4A subfamily. In terms of assembly, voltage-gated sodium (Nav) channels consist of an ion-conducting alpha subunit which is functional on its own associated with regulatory beta subunits. In terms of processing, lacks the cysteine which covalently binds the conotoxin GVIIJ. This cysteine (position 719) is speculated in other sodium channel subunits alpha to be implied in covalent binding with the sodium channel subunit beta-2 or beta-4. As to expression, expressed in skeletal muscle, heart, brain, spinal cord, and eye.

The protein resides in the cell membrane. It catalyses the reaction Na(+)(in) = Na(+)(out). Pore-forming subunit of a voltage-gated sodium (Nav) channel that directly mediates the depolarizing phase of action potentials in excitable membranes. Navs, also called VGSCs (voltage-gated sodium channels) or VDSCs (voltage-dependent sodium channels), operate by switching between closed and open conformations depending on the voltage difference across the membrane. In the open conformation they allow Na(+) ions to selectively pass through the pore, along their electrochemical gradient. The influx of Na+ ions provokes membrane depolarization, initiating the propagation of electrical signals throughout cells and tissues. This Danio rerio (Zebrafish) protein is Sodium channel protein type 4 subunit alpha B (scn4ab).